A 1401-amino-acid polypeptide reads, in one-letter code: DNA-directed RNA polymerase subunit beta'' (1401 aa).

Residues C224, C294, C301, and C304 each coordinate Zn(2+).

It belongs to the RNA polymerase beta' chain family. RpoC2 subfamily. In plastids the minimal PEP RNA polymerase catalytic core is composed of four subunits: alpha, beta, beta', and beta''. When a (nuclear-encoded) sigma factor is associated with the core the holoenzyme is formed, which can initiate transcription. Zn(2+) serves as cofactor.

Its subcellular location is the plastid. The protein localises to the chloroplast. It carries out the reaction RNA(n) + a ribonucleoside 5'-triphosphate = RNA(n+1) + diphosphate. DNA-dependent RNA polymerase catalyzes the transcription of DNA into RNA using the four ribonucleoside triphosphates as substrates. The sequence is that of DNA-directed RNA polymerase subunit beta'' from Nymphaea alba (White water-lily).